Consider the following 185-residue polypeptide: Elongation factor P (185 aa).

This sequence belongs to the elongation factor P family.

The protein localises to the cytoplasm. It participates in protein biosynthesis; polypeptide chain elongation. Functionally, involved in peptide bond synthesis. Stimulates efficient translation and peptide-bond synthesis on native or reconstituted 70S ribosomes in vitro. Probably functions indirectly by altering the affinity of the ribosome for aminoacyl-tRNA, thus increasing their reactivity as acceptors for peptidyl transferase. The chain is Elongation factor P from Oleidesulfovibrio alaskensis (strain ATCC BAA-1058 / DSM 17464 / G20) (Desulfovibrio alaskensis).